We begin with the raw amino-acid sequence, 1498 residues long: Mitogen-activated protein kinase kinase kinase nsy-1 (1498 aa).

Disordered regions lie at residues 1 to 35 and 190 to 209; these read MSQNNKRQVQHNHEMSNDVCPLPLPPRGAPPPTAY and LQSYDKNNNDDDSKPPFART. Positions 22 to 33 are enriched in pro residues; it reads LPLPPRGAPPPT. The Protein kinase domain occupies 664-925; the sequence is SNERVVLGKG…AKDLLQDPFI (262 aa). Residues 670–678 and K693 each bind ATP; that span reads LGKGTYGTV. Residue D790 is the Proton acceptor of the active site. The interval 1022–1050 is disordered; it reads IDHARNRTFSSSSPVPDGQSSAGTNMSHP. The span at 1031–1042 shows a compositional bias: low complexity; that stretch reads SSSSPVPDGQSS. Residues 1276 to 1314 are a coiled coil; that stretch reads SREERVREDRKELRTLQEENEILIERLLQVERELNAQLK. Positions 1461–1498 are disordered; sequence QPVFLSPMRSRDDSLDDYHSSSADDMYTGAAAETSSGN. Over residues 1469 to 1479 the composition is skewed to basic and acidic residues; that stretch reads RSRDDSLDDYH.

This sequence belongs to the protein kinase superfamily. STE Ser/Thr protein kinase family. MAP kinase kinase kinase subfamily. In terms of assembly, interacts with unc-43. Interacts with sek-1. It depends on Mg(2+) as a cofactor. Post-translationally, may be phosphorylated upon pathogenic bacterial infection. May be regulated by proteasomal degradation mediated by the E3-ubiquitin ligase rle-1. Expressed in intestine, hypodermis, rectal gland cell and neurons including sensory AWC neurons.

The protein resides in the cell projection. Its subcellular location is the axon. The protein localises to the perikaryon. It catalyses the reaction L-seryl-[protein] + ATP = O-phospho-L-seryl-[protein] + ADP + H(+). The enzyme catalyses L-threonyl-[protein] + ATP = O-phospho-L-threonyl-[protein] + ADP + H(+). Its function is as follows. Serine/threonine-protein kinase which, by phosphorylating and activating sek-1, plays an important role in the activation of the p38 pathway also composed of the downstream effectors sek-1 and pmk-1. Downstream of CaMKII unc-43 and adapter protein tir-1, plays a role in determining asymmetric cell fates in olfactory AWC neurons during neuronal development. Activation results in the repression of odorant receptor str-2 expression in one of the 2 AWC neurons. Involved in resistance to pathogenic Gram-positive and Gram-negative bacterial and fungal infection. Involved in resistance to the nematotoxic C.cinerea galectin Cgl2. Probably by activating the sek1/pmk-1/skn-1 pathway, involved in the up-regulation of gcs-1 and glutathione-S-transferase gst-4 expression upon bacterial infection. Probably downstream of tir-1 and nipi-3, required for the expression of antimicrobial peptide nlp-29 in the epidermis in response to fungal infection or physical injury. Plays a role in resistance to several environmental stresses including oxidative, protein misfolding (ER) and osmotic stresses, and DNA-damaging reagents. Plays a role in the stabilization of transcription factor rnt-1 in the intestine during oxidative stress. Involved in germline apoptosis induced by heavy metals, such as Cu(2+). In addition, plays a role in the up-regulation of gcs-1 upon arsenite treatment, most likely through activation of pmk-1, to confer protection against toxicity induced by heavy metals. Plays a role downstream of tir-1 in regulating susceptibility to anoxia. Involved in egg laying. The chain is Mitogen-activated protein kinase kinase kinase nsy-1 from Caenorhabditis elegans.